Reading from the N-terminus, the 483-residue chain is Glutamate--tRNA ligase (483 aa).

Positions 11-21 match the 'HIGH' region motif; it reads PSPTGLLHIGN. The 'KMSKS' region motif lies at 255 to 259; it reads KLSKR. ATP is bound at residue K258.

This sequence belongs to the class-I aminoacyl-tRNA synthetase family. Glutamate--tRNA ligase type 1 subfamily. As to quaternary structure, monomer.

Its subcellular location is the cytoplasm. The catalysed reaction is tRNA(Glu) + L-glutamate + ATP = L-glutamyl-tRNA(Glu) + AMP + diphosphate. In terms of biological role, catalyzes the attachment of glutamate to tRNA(Glu) in a two-step reaction: glutamate is first activated by ATP to form Glu-AMP and then transferred to the acceptor end of tRNA(Glu). This Lactococcus lactis subsp. lactis (strain IL1403) (Streptococcus lactis) protein is Glutamate--tRNA ligase.